Consider the following 165-residue polypeptide: Austinoid biosynthesis cluster protein J (165 aa).

Belongs to the trt14 isomerase family. As to quaternary structure, homodimer.

It participates in secondary metabolite biosynthesis; terpenoid biosynthesis. Functionally, part of the gene cluster that mediates the biosynthesis of calidodehydroaustin, a fungal meroterpenoid. The first step of the pathway is the synthesis of 3,5-dimethylorsellinic acid by the polyketide synthase ausA. 3,5-dimethylorsellinic acid is then prenylated by the polyprenyl transferase ausN. Further epoxidation by the FAD-dependent monooxygenase ausM and cyclization by the probable terpene cyclase ausL lead to the formation of protoaustinoid A. Protoaustinoid A is then oxidized to spiro-lactone preaustinoid A3 by the combined action of the FAD-binding monooxygenases ausB and ausC, and the dioxygenase ausE. Acid-catalyzed keto-rearrangement and ring contraction of the tetraketide portion of preaustinoid A3 by ausJ lead to the formation of preaustinoid A4. The aldo-keto reductase ausK, with the help of ausH, is involved in the next step by transforming preaustinoid A4 into isoaustinone which is in turn hydroxylated by the P450 monooxygenase ausI to form austinolide. The cytochrome P450 monooxygenase ausG modifies austinolide to austinol. Austinol is further acetylated to austin by the O-acetyltransferase ausP, which spontaneously changes to dehydroaustin. The cytochrome P450 monooxygenase ausR then converts dehydroaustin is into 7-dehydrodehydroaustin. The hydroxylation catalyzed by ausR permits the O-acetyltransferase ausQ to add an additional acetyl group to the molecule, leading to the formation of acetoxydehydroaustin. The short chain dehydrogenase ausT catalyzes the reduction of the double bond present between carbon atoms 1 and 2 to convert 7-dehydrodehydroaustin into 1,2-dihydro-7-hydroxydehydroaustin. AusQ catalyzes not only an acetylation reaction but also the addition of the PKS ausV diketide product to 1,2-dihydro-7-hydroxydehydroaustin, forming precalidodehydroaustin. Finally, the iron/alpha-ketoglutarate-dependent dioxygenase converts precalidodehydroaustin into calidodehydroaustin. The polypeptide is Austinoid biosynthesis cluster protein J (Aspergillus calidoustus).